The primary structure comprises 267 residues: Ubiquinone biosynthesis protein COQ4 homolog, mitochondrial (267 aa).

Zn(2+) contacts are provided by histidine 170, aspartate 171, histidine 174, and glutamate 186.

Belongs to the COQ4 family. Component of a multi-subunit COQ enzyme complex. Zn(2+) serves as cofactor.

The protein localises to the mitochondrion inner membrane. It catalyses the reaction a 4-hydroxy-3-methoxy-5-(all-trans-polyprenyl)benzoate + H(+) = a 2-methoxy-6-(all-trans-polyprenyl)phenol + CO2. Its pathway is cofactor biosynthesis; ubiquinone biosynthesis. Lyase that catalyzes the C1-decarboxylation of 4-hydroxy-3-methoxy-5-(all-trans-polyprenyl)benzoic acid into 2-methoxy-6-(all-trans-polyprenyl)phenol during ubiquinone biosynthesis. This is Ubiquinone biosynthesis protein COQ4 homolog, mitochondrial from Drosophila pseudoobscura pseudoobscura (Fruit fly).